We begin with the raw amino-acid sequence, 589 residues long: Mitoguardin 2 (589 aa).

A run of 2 helical transmembrane segments spans residues 11–31 and 42–62; these read IIQA…TTFG and PGLR…ALAA. The tract at residues 87–134 is disordered; that stretch reads VPGSVLPVRRSSSAKKGYSRSRVQSPSSKSNDTLSGISSLDPSKHSSS. Composition is skewed to low complexity over residues 106 to 116 and 123 to 134; these read RSRVQSPSSKS and ISSLDPSKHSSS.

It belongs to the mitoguardin family. As to quaternary structure, homodimer and heterodimer; forms heterodimers with miga1.

The protein resides in the mitochondrion outer membrane. Functionally, regulator of mitochondrial fusion: acts by forming homo- and heterodimers at the mitochondrial outer membrane and facilitating the formation of pld6/MitoPLD dimers. May act by regulating phospholipid metabolism via pld6/MitoPLD. This is Mitoguardin 2 from Xenopus laevis (African clawed frog).